The following is a 233-amino-acid chain: Phosphoribosylformylglycinamidine synthase subunit PurQ (233 aa).

In terms of domain architecture, Glutamine amidotransferase type-1 spans alanine 3–alanine 233. Cysteine 87 (nucleophile) is an active-site residue. Catalysis depends on residues histidine 204 and glutamate 206.

Part of the FGAM synthase complex composed of 1 PurL, 1 PurQ and 2 PurS subunits.

Its subcellular location is the cytoplasm. It carries out the reaction N(2)-formyl-N(1)-(5-phospho-beta-D-ribosyl)glycinamide + L-glutamine + ATP + H2O = 2-formamido-N(1)-(5-O-phospho-beta-D-ribosyl)acetamidine + L-glutamate + ADP + phosphate + H(+). It catalyses the reaction L-glutamine + H2O = L-glutamate + NH4(+). Its pathway is purine metabolism; IMP biosynthesis via de novo pathway; 5-amino-1-(5-phospho-D-ribosyl)imidazole from N(2)-formyl-N(1)-(5-phospho-D-ribosyl)glycinamide: step 1/2. Functionally, part of the phosphoribosylformylglycinamidine synthase complex involved in the purines biosynthetic pathway. Catalyzes the ATP-dependent conversion of formylglycinamide ribonucleotide (FGAR) and glutamine to yield formylglycinamidine ribonucleotide (FGAM) and glutamate. The FGAM synthase complex is composed of three subunits. PurQ produces an ammonia molecule by converting glutamine to glutamate. PurL transfers the ammonia molecule to FGAR to form FGAM in an ATP-dependent manner. PurS interacts with PurQ and PurL and is thought to assist in the transfer of the ammonia molecule from PurQ to PurL. The chain is Phosphoribosylformylglycinamidine synthase subunit PurQ from Bradyrhizobium diazoefficiens (strain JCM 10833 / BCRC 13528 / IAM 13628 / NBRC 14792 / USDA 110).